The chain runs to 342 residues: Elongation factor Ts (342 aa).

The interval 79–82 (TDFV) is involved in Mg(2+) ion dislocation from EF-Tu.

Belongs to the EF-Ts family.

Its subcellular location is the cytoplasm. Associates with the EF-Tu.GDP complex and induces the exchange of GDP to GTP. It remains bound to the aminoacyl-tRNA.EF-Tu.GTP complex up to the GTP hydrolysis stage on the ribosome. The protein is Elongation factor Ts (tsf) of Lactococcus lactis subsp. lactis (strain IL1403) (Streptococcus lactis).